The primary structure comprises 216 residues: Octanoyltransferase (216 aa).

Residues 30-216 form the BPL/LPL catalytic domain; the sequence is GEAGEAVWLL…KRQFFEVFGA (187 aa). Substrate contacts are provided by residues 69–76, 149–151, and 162–164; these read RGGQYTYH, AIG, and GLS. The active-site Acyl-thioester intermediate is the Cys-180.

It belongs to the LipB family.

It localises to the cytoplasm. It carries out the reaction octanoyl-[ACP] + L-lysyl-[protein] = N(6)-octanoyl-L-lysyl-[protein] + holo-[ACP] + H(+). The protein operates within protein modification; protein lipoylation via endogenous pathway; protein N(6)-(lipoyl)lysine from octanoyl-[acyl-carrier-protein]: step 1/2. Catalyzes the transfer of endogenously produced octanoic acid from octanoyl-acyl-carrier-protein onto the lipoyl domains of lipoate-dependent enzymes. Lipoyl-ACP can also act as a substrate although octanoyl-ACP is likely to be the physiological substrate. The protein is Octanoyltransferase of Jannaschia sp. (strain CCS1).